We begin with the raw amino-acid sequence, 272 residues long: Dermonecrotic toxin StSicTox-betaIC1 (272 aa).

His-5 is a catalytic residue. The Mg(2+) site is built by Glu-25 and Asp-27. The active-site Nucleophile is the His-41. 2 disulfide bridges follow: Cys-45–Cys-51 and Cys-47–Cys-191. Asp-85 contributes to the Mg(2+) binding site.

The protein belongs to the arthropod phospholipase D family. Class II subfamily. Class IIb sub-subfamily. The cofactor is Mg(2+). As to expression, expressed by the venom gland.

It localises to the secreted. The enzyme catalyses an N-(acyl)-sphingosylphosphocholine = an N-(acyl)-sphingosyl-1,3-cyclic phosphate + choline. The catalysed reaction is N-hexanoyl-sphing-4-enine-1-phosphocholine = N-(hexanoyl)-sphing-4-enine-1,3-cyclic phosphate + choline. It carries out the reaction an N-(acyl)-sphingosylphosphoethanolamine = an N-(acyl)-sphingosyl-1,3-cyclic phosphate + ethanolamine. It catalyses the reaction N-dodecanoyl-heptadecasphing-4-enine-1-phosphoethanolamine = N-dodecanoyl-heptadecasphing-4-enine-1,3-cyclic phosphate + ethanolamine. The enzyme catalyses a 1-acyl-sn-glycero-3-phosphoethanolamine = a 1-acyl-sn-glycero-2,3-cyclic phosphate + ethanolamine. The catalysed reaction is 1-tetradecanoyl-sn-glycero-3-phosphoethanolamine = 1-tetradecanoyl-sn-glycero-2,3-cyclic phosphate + ethanolamine. Dermonecrotic toxins cleave the phosphodiester linkage between the phosphate and headgroup of certain phospholipids (sphingolipid and lysolipid substrates), forming an alcohol (often choline) and a cyclic phosphate. This toxin acts on lysophosphatidylethanolamine (LPE) and ceramide phosphoethanolamine (CPE) with high activity. This toxin acts on sphingomyelin (SM) with very low activity and is not active on lysophosphatidylserine (LPS), lysophosphatidylcholine (LPC) and lysophosphatidylglycerol (LPG). It acts by transphosphatidylation, releasing exclusively cyclic phosphate as second products. It is not surprising that spider toxins have affinity for ethanolamine-containing sphingolipids since they are common in insect prey. Induces dermonecrosis, hemolysis, increased vascular permeability, edema, inflammatory response, and platelet aggregation. The protein is Dermonecrotic toxin StSicTox-betaIC1 of Sicarius terrosus (Cave spider).